Consider the following 787-residue polypeptide: Protein translocase subunit SecA (787 aa).

ATP-binding positions include Q85, 103–107, and D492; that span reads GEGKT.

This sequence belongs to the SecA family. Monomer and homodimer. Part of the essential Sec protein translocation apparatus which comprises SecA, SecYEG and auxiliary proteins SecDF. Other proteins may also be involved.

It is found in the cell membrane. It localises to the cytoplasm. The enzyme catalyses ATP + H2O + cellular proteinSide 1 = ADP + phosphate + cellular proteinSide 2.. In terms of biological role, part of the Sec protein translocase complex. Interacts with the SecYEG preprotein conducting channel. Has a central role in coupling the hydrolysis of ATP to the transfer of proteins into and across the cell membrane, serving as an ATP-driven molecular motor driving the stepwise translocation of polypeptide chains across the membrane. In Limosilactobacillus reuteri (strain DSM 20016) (Lactobacillus reuteri), this protein is Protein translocase subunit SecA.